We begin with the raw amino-acid sequence, 809 residues long: Valine--tRNA ligase (809 aa).

The 'HIGH' region signature appears at 60–70 (PFTSGELHMGH). The short motif at 546 to 550 (RMSKS) is the 'KMSKS' region element. Residue Lys549 participates in ATP binding.

The protein belongs to the class-I aminoacyl-tRNA synthetase family. ValS type 2 subfamily.

Its subcellular location is the cytoplasm. It carries out the reaction tRNA(Val) + L-valine + ATP = L-valyl-tRNA(Val) + AMP + diphosphate. Its function is as follows. Catalyzes the attachment of valine to tRNA(Val). As ValRS can inadvertently accommodate and process structurally similar amino acids such as threonine, to avoid such errors, it has a 'posttransfer' editing activity that hydrolyzes mischarged Thr-tRNA(Val) in a tRNA-dependent manner. This chain is Valine--tRNA ligase, found in Sulfurisphaera tokodaii (strain DSM 16993 / JCM 10545 / NBRC 100140 / 7) (Sulfolobus tokodaii).